A 377-amino-acid polypeptide reads, in one-letter code: Carbamoyl phosphate synthase small chain (377 aa).

A CPSase region spans residues 1-186; the sequence is MSTPALLVLA…LGKGFVTPDE (186 aa). The L-glutamine site is built by Ser47, Gly238, and Gly240. A Glutamine amidotransferase type-1 domain is found at 190–377; it reads HVVAYDFGVK…IGNMKAAKRA (188 aa). Catalysis depends on Cys266, which acts as the Nucleophile. Residues Leu267, Gln270, Asn308, Gly310, and Phe311 each contribute to the L-glutamine site. Active-site residues include His350 and Glu352.

It belongs to the CarA family. In terms of assembly, composed of two chains; the small (or glutamine) chain promotes the hydrolysis of glutamine to ammonia, which is used by the large (or ammonia) chain to synthesize carbamoyl phosphate. Tetramer of heterodimers (alpha,beta)4.

It carries out the reaction hydrogencarbonate + L-glutamine + 2 ATP + H2O = carbamoyl phosphate + L-glutamate + 2 ADP + phosphate + 2 H(+). It catalyses the reaction L-glutamine + H2O = L-glutamate + NH4(+). The protein operates within amino-acid biosynthesis; L-arginine biosynthesis; carbamoyl phosphate from bicarbonate: step 1/1. It participates in pyrimidine metabolism; UMP biosynthesis via de novo pathway; (S)-dihydroorotate from bicarbonate: step 1/3. Functionally, small subunit of the glutamine-dependent carbamoyl phosphate synthetase (CPSase). CPSase catalyzes the formation of carbamoyl phosphate from the ammonia moiety of glutamine, carbonate, and phosphate donated by ATP, constituting the first step of 2 biosynthetic pathways, one leading to arginine and/or urea and the other to pyrimidine nucleotides. The small subunit (glutamine amidotransferase) binds and cleaves glutamine to supply the large subunit with the substrate ammonia. In Neisseria meningitidis serogroup A / serotype 4A (strain DSM 15465 / Z2491), this protein is Carbamoyl phosphate synthase small chain.